A 63-amino-acid polypeptide reads, in one-letter code: Cytochrome c oxidase subunit 5C-1 (63 aa).

A helical membrane pass occupies residues 15-34; it reads SEVKELIIGSVLGLAAGGLW.

It belongs to the cytochrome c oxidase subunit 5C family.

It localises to the mitochondrion inner membrane. In terms of biological role, this protein is one of the nuclear-coded polypeptide chains of cytochrome c oxidase, the terminal oxidase in mitochondrial electron transport. In Helianthus annuus (Common sunflower), this protein is Cytochrome c oxidase subunit 5C-1 (COX5C1).